The chain runs to 421 residues: MRGLVNKLVSRSLSISGKWQNQQLRRLNIHEYQGAELMGKYGVNVPKGVAASSLEEVKKAIQDVFPNESELVVKSQILAGGRGLGTFKSGLKGGVHIVKRDEAEEIAGKMLGQVLVTKQTGPQGKVVSKVYLCEKLSLVNEMYFSIILDRKSAGPLIIACKKGGTSIEDLAEKFPDMIIKVPIDVFAGITDEDAAKVVDGLAPKAADRKDSIEQVKKLYELFRKTDCTMLEINPLAETSTNQLVAADAKLNFDDNAAFRQKEVFAMRDPTQEDPREVAAAKVDLNYIGLDGEIGCMVNGAGLAMATMDIIKLHGGTPANFLDVGGNASEHQVVEAFKILTSDDKVKAILVNIFGGIMKCDVIASGIVNAAKEVALKVPVVVRLEGTNVEQGKRILKESGMKLITADDLDDAAEKAVKALAH.

Residues 1 to 26 constitute a mitochondrion transit peptide; sequence MRGLVNKLVSRSLSISGKWQNQQLRR. The region spanning 35 to 278 is the ATP-grasp domain; that stretch reads AELMGKYGVN…PTQEDPREVA (244 aa). ATP contacts are provided by residues lysine 74, 81 to 83, and glutamate 141; that span reads GRG. Mg(2+) is bound by residues asparagine 233 and aspartate 247. Residues asparagine 298 and 355–357 each bind substrate; that span reads GIM.

Belongs to the succinate/malate CoA ligase beta subunit family. In terms of assembly, heterodimer of an alpha and a beta subunit. It depends on Mg(2+) as a cofactor.

It localises to the mitochondrion. It carries out the reaction succinate + ATP + CoA = succinyl-CoA + ADP + phosphate. Its pathway is carbohydrate metabolism; tricarboxylic acid cycle; succinate from succinyl-CoA (ligase route): step 1/1. Its function is as follows. Succinyl-CoA synthetase functions in the citric acid cycle (TCA), coupling the hydrolysis of succinyl-CoA to the synthesis of ATP and thus represents the only step of substrate-level phosphorylation in the TCA. The beta subunit provides nucleotide specificity of the enzyme and binds the substrate succinate, while the binding sites for coenzyme A and phosphate are found in the alpha subunit. The sequence is that of Succinate--CoA ligase [ADP-forming] subunit beta, mitochondrial from Arabidopsis thaliana (Mouse-ear cress).